Reading from the N-terminus, the 313-residue chain is MLRLRTPSRIHITLIDLNGSIGRVDGGVGLALEEPHIEIKAKESETFVLKGEPINRERFEIAAAKMAEYCGRGAEIEVVSDYDAHVGLGSGTQISLAVGRAFSELYGLNLTTRQIAEIMGRGGTSGIGVAVFDHGGLVVDGGHSTKEKKSFLPSSASRAKPAPMIARLDFPDWNVVLAIPDLKGFFGEREVNLFQKSCPVPLEDVREICHLILMKMLPAVVEADLDEFGKALKRIQELGFKKAEVEQYGELIKGCFDLADCIGMSSTGPTVYAITDSNAGGIERSLRDYFAEKGYECRTIVTKARNRGVEIEV.

This sequence belongs to the beta-RFA-P synthase family. In terms of assembly, homodimer.

The enzyme catalyses 5-phospho-alpha-D-ribose 1-diphosphate + 4-hydroxybenzoate + H(+) = 4-(beta-D-ribofuranosyl)phenol 5'-phosphate + CO2 + diphosphate. It carries out the reaction 4-aminobenzoate + 5-phospho-alpha-D-ribose 1-diphosphate + H(+) = 4-(beta-D-ribofuranosyl)aminobenzene 5'-phosphate + CO2 + diphosphate. It functions in the pathway cofactor biosynthesis; 5,6,7,8-tetrahydromethanopterin biosynthesis. Functionally, catalyzes the condensation of 4-hydroxybenzoate (HB) with 5-phospho-alpha-D-ribose 1-diphosphate (PRPP) to produce beta-ribofuranosylphenol 5'-phosphate (beta-RFH-P). Also catalyzes the condensation of 4-aminobenzoate (pABA) with PRPP to produce beta-ribofuranosylaminobenzene 5'-phosphate (beta-RFA-P). The polypeptide is Beta-ribofuranosylphenol 5'-phosphate synthase (Archaeoglobus fulgidus (strain ATCC 49558 / DSM 4304 / JCM 9628 / NBRC 100126 / VC-16)).